The following is a 215-amino-acid chain: Adenylate kinase (215 aa).

Residue 10-15 (GAGKGT) coordinates ATP. The tract at residues 30 to 59 (STGDMFRAAIKDQTPLGQEAKSYMDKGELV) is NMP. AMP contacts are provided by residues Thr31, Arg36, 57–59 (ELV), 85–88 (GFPR), and Gln92. The segment at 126-163 (GRRICPTCGATYHVIYNPPKVEGVCDIDGSALVQREDD) is LID. ATP is bound at residue Arg127. Cys130 and Cys133 together coordinate Zn(2+). Residue 136–137 (TY) participates in ATP binding. Zn(2+)-binding residues include Cys150 and Asp153. AMP contacts are provided by Arg160 and Arg171. Arg199 contacts ATP.

This sequence belongs to the adenylate kinase family. As to quaternary structure, monomer.

The protein localises to the cytoplasm. The enzyme catalyses AMP + ATP = 2 ADP. The protein operates within purine metabolism; AMP biosynthesis via salvage pathway; AMP from ADP: step 1/1. Its function is as follows. Catalyzes the reversible transfer of the terminal phosphate group between ATP and AMP. Plays an important role in cellular energy homeostasis and in adenine nucleotide metabolism. The sequence is that of Adenylate kinase from Exiguobacterium sibiricum (strain DSM 17290 / CCUG 55495 / CIP 109462 / JCM 13490 / 255-15).